Reading from the N-terminus, the 485-residue chain is Tektin-5 (485 aa).

Coiled coils occupy residues 114 to 185, 225 to 247, 307 to 385, and 421 to 444; these read RLTD…EVNC, QEQM…DAQH, QNMR…MAKE, and TIDD…QLLV.

Belongs to the tektin family. As to quaternary structure, microtubule inner protein component of sperm flagellar doublet microtubules. Interacts with TEKT3. In terms of processing, ubiquitinated, leading to its degradation. Deubiquitinated by USP16, promoting its stability.

It is found in the cytoplasm. The protein localises to the cytoskeleton. Its subcellular location is the flagellum axoneme. Sperm-specific microtubule inner protein (MIP) part of the dynein-decorated doublet microtubules (DMTs) in flagellar axoneme. Forms an extensive interaction network in different conformations that reinforces the helix bundle composed by other tektin proteins (TEKT1 to TEKT4) and MIPs to anchor the tektin bundle onto the tubulin wall of A-tubule of the sperm flagellum. The sequence is that of Tektin-5 (TEKT5) from Homo sapiens (Human).